Consider the following 201-residue polypeptide: Recombination protein RecR (201 aa).

A C4-type zinc finger spans residues 60-75 (CSCCGNVDTSDPCTIC). In terms of domain architecture, Toprim spans 83 to 178 (ATLIVVEDVS…RVTRLAHGVP (96 aa)).

It belongs to the RecR family.

In terms of biological role, may play a role in DNA repair. It seems to be involved in an RecBC-independent recombinational process of DNA repair. It may act with RecF and RecO. The sequence is that of Recombination protein RecR from Brucella ovis (strain ATCC 25840 / 63/290 / NCTC 10512).